The primary structure comprises 173 residues: RNA pyrophosphohydrolase (173 aa).

Positions 11–164 constitute a Nudix hydrolase domain; the sequence is PYRKCVGILV…KKHVYTQVVK (154 aa). The Nudix box motif lies at 52-73; sequence GGINQGEKPIDAARRELYEETG.

It belongs to the Nudix hydrolase family. RppH subfamily. A divalent metal cation is required as a cofactor.

Accelerates the degradation of transcripts by removing pyrophosphate from the 5'-end of triphosphorylated RNA, leading to a more labile monophosphorylated state that can stimulate subsequent ribonuclease cleavage. The chain is RNA pyrophosphohydrolase from Bartonella clarridgeiae.